The chain runs to 279 residues: Beta-porphyranase E (279 aa).

An N-terminal signal peptide occupies residues 1–18; that stretch reads MGNTMLLTLLLVVVAAYG. A GH16 domain is found at 19–277; the sequence is QTPPPPEGFR…WVRSYTLLPV (259 aa). The substrate site is built by tryptophan 56, arginine 60, glutamate 141, glutamate 146, and glutamate 243. Glutamate 141 (nucleophile) is an active-site residue. Glutamate 146 serves as the catalytic Proton donor.

This sequence belongs to the glycosyl hydrolase 16 family.

The protein resides in the periplasm. The enzyme catalyses Hydrolysis of beta-D-galactopyranose-(1-&gt;4)-alpha-L-galactopyranose-6-sulfate linkages in porphyran.. Cleaves the sulfated polysaccharide porphyran at the (1-&gt;4) linkages between beta-D-galactopyranose and alpha-L-galactopyranose-6-sulfate, forming mostly the disaccharide alpha-L-galactopyranose-6-sulfate-(1-&gt;3)-beta-D-galactose. This chain is Beta-porphyranase E (porE), found in Zobellia galactanivorans (strain DSM 12802 / CCUG 47099 / CIP 106680 / NCIMB 13871 / Dsij).